We begin with the raw amino-acid sequence, 147 residues long: MVEWTDEERTIINDIFSTLDYEEIGRKSLCRCLIVYPWTQRYFGAFGNLYNAETIMANPLIAAHGTKILHGLDRALKNMDDIKNTYAELSLLHSDKLHVDPDNFRLLADCLTVVIAAKMGPAFTVDTQVAVQKFLSVVVSALGRQYH.

The Globin domain occupies 3–147; sequence EWTDEERTII…VVSALGRQYH (145 aa). Heme b-binding residues include His-64 and His-93.

The protein belongs to the globin family. As to quaternary structure, hb 2 is a heterotetramer of two alpha-2 and two beta-2 chains. Hb 3 is a heterotetramer of two alpha-1 and two beta-2 chains. Red blood cells.

Involved in oxygen transport from gills to the various peripheral tissues. The chain is Hemoglobin subunit beta-2 (hbb2) from Gadus morhua (Atlantic cod).